The primary structure comprises 326 residues: Vacuolar protein sorting-associated protein 26A (326 aa).

The protein belongs to the VPS26 family. As to quaternary structure, component of the heterotrimeric retromer cargo-selective complex (CSC) which is believed to associate with variable sorting nexins to form functionally distinct retromer complex variants.

The protein localises to the cytoplasm. It is found in the endosome membrane. It localises to the early endosome. Functionally, acts as a component of the retromer cargo-selective complex (CSC). The CSC is believed to be the core functional component of retromer or respective retromer complex variants acting to prevent missorting of selected transmembrane cargo proteins into the lysosomal degradation pathway. Retromer mediates retrograde transport of cargo proteins from endosomes to the trans-Golgi network (TGN). The protein is Vacuolar protein sorting-associated protein 26A (vps26a) of Xenopus tropicalis (Western clawed frog).